Consider the following 293-residue polypeptide: Glycine N-methyltransferase (293 aa).

Residue valine 2 is modified to N-acetylvaline. Serine 4 and tyrosine 6 together coordinate (6S)-5-methyl-5,6,7,8-tetrahydrofolate. Serine 10 is subject to Phosphoserine. S-adenosyl-L-methionine-binding residues include tyrosine 22, tryptophan 31, tyrosine 34, and arginine 41. Position 34 is a phosphotyrosine (tyrosine 34). At lysine 46 the chain carries N6-succinyllysine. Residues alanine 65, 86–88, 117–118, 137–140, and arginine 176 contribute to the S-adenosyl-L-methionine site; these read DAS, NW, and LGNS. N6-succinyllysine occurs at positions 191, 196, and 201. Histidine 215 contacts (6S)-5-methyl-5,6,7,8-tetrahydrofolate. Tyrosine 221 provides a ligand contact to S-adenosyl-L-methionine. (6S)-5-methyl-5,6,7,8-tetrahydrofolate is bound at residue arginine 240.

This sequence belongs to the class I-like SAM-binding methyltransferase superfamily. Glycine N-methyltransferase family. In terms of assembly, homotetramer. In terms of tissue distribution, abundant in liver.

It is found in the cytoplasm. The enzyme catalyses glycine + S-adenosyl-L-methionine = sarcosine + S-adenosyl-L-homocysteine + H(+). Inhibited by 5-methyltetrahydrofolate monoglutamate and by 5-methyltetrahydrofolate pentaglutamate, inhibition is much more effective by the pentaglutamate form than by the monoglutamate form. Two molecules of 5-methyltetrahydrofolate are bound per tetramer. The binding sites are localized between subunits. Inhibitor binding may preclude movements of the polypeptide chain that are necessary for enzyme activity. Its function is as follows. Catalyzes the methylation of glycine by using S-adenosylmethionine (AdoMet) to form N-methylglycine (sarcosine) with the concomitant production of S-adenosylhomocysteine (AdoHcy), a reaction regulated by the binding of 5-methyltetrahydrofolate. Possible crucial role in the regulation of tissue concentration of AdoMet and of metabolism of methionine. This is Glycine N-methyltransferase (Gnmt) from Rattus norvegicus (Rat).